A 311-amino-acid polypeptide reads, in one-letter code: MSVVNNRVALTNLVSMEALTTEEVLGLINRGSEYKAGKVVISDHQKDLVANLFFENSTRTHKSFEVAEKKLGLTVLDFNADASAVNKGESLYDTVLTMSALGTDICVIRHPEDDYYKELVESPTITASIVNGGDGSGQHPSQCLLDLLTIYEEFGRFEGLKIAIAGDLTHSRVAKSNMQILKRLGAELYFYGPEEWYSEAFNAYGTYIAIDQIIKELDVLMLLRVQHERHDGHQSFSKEGYHQAFGLTQERYQQLKDSAIIMHPAPVNRDVEIADSLVEAPKARIVSQMANGVFVRMAIIEAILNGRNKNS.

Carbamoyl phosphate-binding residues include R59 and T60. K87 contacts L-aspartate. Carbamoyl phosphate-binding residues include R109, H139, and Q142. L-aspartate contacts are provided by R172 and R224. Carbamoyl phosphate is bound by residues A265 and P266.

The protein belongs to the aspartate/ornithine carbamoyltransferase superfamily. ATCase family. In terms of assembly, heterododecamer (2C3:3R2) of six catalytic PyrB chains organized as two trimers (C3), and six regulatory PyrI chains organized as three dimers (R2).

The enzyme catalyses carbamoyl phosphate + L-aspartate = N-carbamoyl-L-aspartate + phosphate + H(+). The protein operates within pyrimidine metabolism; UMP biosynthesis via de novo pathway; (S)-dihydroorotate from bicarbonate: step 2/3. In terms of biological role, catalyzes the condensation of carbamoyl phosphate and aspartate to form carbamoyl aspartate and inorganic phosphate, the committed step in the de novo pyrimidine nucleotide biosynthesis pathway. The sequence is that of Aspartate carbamoyltransferase catalytic subunit from Streptococcus pyogenes serotype M1.